The sequence spans 498 residues: Ammonium transporter 3 member 1 (498 aa).

A run of 11 helical transmembrane segments spans residues 33–53 (ISATLVGMQSVPGLVILYGSI), 58–78 (WAVNSAFMALYAFAAVWLCWV), 143–163 (MVYFQCVFAAITLILLAGSLL), 171–191 (WMLFVPLWLTFSYTVGAFSLW), 206–226 (GGYVIHLSSGVAGFTAAYWVG), 241–261 (VLLMLTGAGILWMGWAGFNGG), 276–296 (NTNICAATSLLVWTCLDVIFF), 301–321 (VIGAVQGMITGLVCITPGAGL), 325–345 (WAAIVMGILSGSIPWFTMMVV), 369–389 (GFLGGATTGLFAEPVLCSLFL), and 412–432 (VAGALFIICWNVVVTSLVCLA). The segment at 478-498 (DNNDTHHNNNKAAPSGVTQNV) is disordered. Over residues 487-498 (NKAAPSGVTQNV) the composition is skewed to polar residues.

This sequence belongs to the ammonia transporter channel (TC 1.A.11.2) family. As to expression, expressed in root.

It is found in the membrane. In terms of biological role, involved in ammonium transport. The chain is Ammonium transporter 3 member 1 (AMT3-1) from Oryza sativa subsp. japonica (Rice).